Consider the following 456-residue polypeptide: MAEAEAEAAGAGAGAGPARRTTRVGRYELGKTIGEGSFAKVKVARDTRTGDTLAIKVLDRNHVLRHKMVEQIKREISTMKLIKHPNVVQLHEVMASKSKIYMVLEYVDGGELFDKIVNSGRLGEDEARRYFHQLINAVDYCHSRGVYHRDLKPENLLLDSHGALKVSDFGLSAFAPQTKEDGLLHTACGTPNYVAPEVLADKGYDGMAADVWSCGIILFVLMAGYLPFDDPNLMTLYKLICKAKVSCPHWFSSGAKKFIKRILDPNPCTRITIAQILEDDWFKKDYKPPLFEQGEDVSLDDVDAAFDCSEENLVAEKREKPESMNAFALISRSQGFNLGNLFEKEMMGMVKRETSFTSQCTPQEIMSKIEEACGPLGFNVRKQNYKMKLKGDKTGRKGYLSVATEVFEVAPSLHMVELRKTGGDTLEFHNFYNNFSSELKDIVWKSESDAKAAKKR.

Positions 27 to 282 constitute a Protein kinase domain; the sequence is YELGKTIGEG…IAQILEDDWF (256 aa). Residues 33-41 and lysine 56 each bind ATP; that span reads IGEGSFAKV. The active-site Proton acceptor is the aspartate 150. Residues 168–197 are activation loop; sequence DFGLSAFAPQTKEDGLLHTACGTPNYVAPE. Residues 318-343 form the NAF domain; that stretch reads REKPESMNAFALISRSQGFNLGNLFE. Residues 351 to 380 form a PPI region; it reads KRETSFTSQCTPQEIMSKIEEACGPLGFNV.

Belongs to the protein kinase superfamily. CAMK Ser/Thr protein kinase family. SNF1 subfamily. Requires Mn(2+) as cofactor.

The enzyme catalyses L-seryl-[protein] + ATP = O-phospho-L-seryl-[protein] + ADP + H(+). It catalyses the reaction L-threonyl-[protein] + ATP = O-phospho-L-threonyl-[protein] + ADP + H(+). Its function is as follows. CIPK serine-threonine protein kinases interact with CBL proteins. Binding of a CBL protein to the regulatory NAF domain of CIPK protein lead to the activation of the kinase in a calcium-dependent manner. This is CBL-interacting protein kinase 9 (CIPK9) from Oryza sativa subsp. japonica (Rice).